The chain runs to 119 residues: Large ribosomal subunit protein bL20 (119 aa).

It belongs to the bacterial ribosomal protein bL20 family.

In terms of biological role, binds directly to 23S ribosomal RNA and is necessary for the in vitro assembly process of the 50S ribosomal subunit. It is not involved in the protein synthesizing functions of that subunit. This is Large ribosomal subunit protein bL20 from Rhodopseudomonas palustris (strain HaA2).